Consider the following 187-residue polypeptide: Thioredoxin F, chloroplastic (187 aa).

Residues 1 to 72 (MALRLSVSSS…GSDTATVGAE (72 aa)) constitute a chloroplast transit peptide. Residues 73–186 (AEAVAVTGQV…LIQAIETVKS (114 aa)) form the Thioredoxin domain. Active-site nucleophile residues include C111 and C114. Residues C111 and C114 are joined by a disulfide bond.

This sequence belongs to the thioredoxin family. Plant F-type subfamily.

The protein resides in the plastid. Its subcellular location is the chloroplast. Its function is as follows. Thiol-disulfide oxidoreductase involved in the redox regulation of enzymes of both reductive pentose phosphate pathway (Calvin-Benson cycle) and oxidative pentose phosphate pathway. The sequence is that of Thioredoxin F, chloroplastic from Oryza sativa subsp. japonica (Rice).